Consider the following 78-residue polypeptide: Gas vesicle protein G (78 aa).

Belongs to the gas vesicle GvpG family.

It is found in the gas vesicle. In terms of biological role, might be a minor component of the gas vesicle involved in nucleating their formation. Gas vesicles are hollow, gas filled proteinaceous nanostructures found in some microorganisms. It is not clear what function gas vesicles perform in soil bacteria. This Streptomyces sp. (strain CB03234) protein is Gas vesicle protein G.